The sequence spans 211 residues: Pyridoxine/pyridoxamine 5'-phosphate oxidase (211 aa).

Residues 7–10 and K65 contribute to the substrate site; that span reads RREY. FMN contacts are provided by residues 60 to 65, 75 to 76, R81, K82, and Q104; these read RIVLLK and YT. Substrate is bound by residues Y122, R126, and S130. FMN contacts are provided by residues 139–140 and W184; that span reads QS. Residue 190–192 coordinates substrate; it reads RLH. R194 is a binding site for FMN.

Belongs to the pyridoxamine 5'-phosphate oxidase family. In terms of assembly, homodimer. The cofactor is FMN.

The enzyme catalyses pyridoxamine 5'-phosphate + O2 + H2O = pyridoxal 5'-phosphate + H2O2 + NH4(+). It catalyses the reaction pyridoxine 5'-phosphate + O2 = pyridoxal 5'-phosphate + H2O2. It functions in the pathway cofactor metabolism; pyridoxal 5'-phosphate salvage; pyridoxal 5'-phosphate from pyridoxamine 5'-phosphate: step 1/1. It participates in cofactor metabolism; pyridoxal 5'-phosphate salvage; pyridoxal 5'-phosphate from pyridoxine 5'-phosphate: step 1/1. Its function is as follows. Catalyzes the oxidation of either pyridoxine 5'-phosphate (PNP) or pyridoxamine 5'-phosphate (PMP) into pyridoxal 5'-phosphate (PLP). The chain is Pyridoxine/pyridoxamine 5'-phosphate oxidase from Vibrio cholerae serotype O1 (strain ATCC 39315 / El Tor Inaba N16961).